A 118-amino-acid polypeptide reads, in one-letter code: Small ribosomal subunit protein uS13 (118 aa).

Residues 93–118 (KGLPVRGQRTKTNARTRKGPRKPIRK) are disordered.

Belongs to the universal ribosomal protein uS13 family. As to quaternary structure, part of the 30S ribosomal subunit. Forms a loose heterodimer with protein S19. Forms two bridges to the 50S subunit in the 70S ribosome.

Functionally, located at the top of the head of the 30S subunit, it contacts several helices of the 16S rRNA. In the 70S ribosome it contacts the 23S rRNA (bridge B1a) and protein L5 of the 50S subunit (bridge B1b), connecting the 2 subunits; these bridges are implicated in subunit movement. Contacts the tRNAs in the A and P-sites. The sequence is that of Small ribosomal subunit protein uS13 from Ectopseudomonas mendocina (strain ymp) (Pseudomonas mendocina).